We begin with the raw amino-acid sequence, 429 residues long: UDP-N-acetylglucosamine 1-carboxyvinyltransferase (429 aa).

Lysine 22 to asparagine 23 provides a ligand contact to phosphoenolpyruvate. Arginine 102 is a UDP-N-acetyl-alpha-D-glucosamine binding site. Catalysis depends on cysteine 126, which acts as the Proton donor. Residue cysteine 126 is modified to 2-(S-cysteinyl)pyruvic acid O-phosphothioketal. UDP-N-acetyl-alpha-D-glucosamine-binding positions include arginine 131 to leucine 135, aspartate 316, and isoleucine 338.

It belongs to the EPSP synthase family. MurA subfamily.

Its subcellular location is the cytoplasm. The enzyme catalyses phosphoenolpyruvate + UDP-N-acetyl-alpha-D-glucosamine = UDP-N-acetyl-3-O-(1-carboxyvinyl)-alpha-D-glucosamine + phosphate. It functions in the pathway cell wall biogenesis; peptidoglycan biosynthesis. Its function is as follows. Cell wall formation. Adds enolpyruvyl to UDP-N-acetylglucosamine. In Nitrobacter winogradskyi (strain ATCC 25391 / DSM 10237 / CIP 104748 / NCIMB 11846 / Nb-255), this protein is UDP-N-acetylglucosamine 1-carboxyvinyltransferase.